Reading from the N-terminus, the 331-residue chain is Isopentenyl-diphosphate delta-isomerase (331 aa).

4 to 5 lines the substrate pocket; it reads RK. Residues 59-61, Ser-89, and Asn-116 contribute to the FMN site; that span reads AMT. Gln-146 contributes to the substrate binding site. Mg(2+) is bound at residue Glu-147. Residues Lys-178, Ser-203, Thr-208, 252-254, and 273-274 contribute to the FMN site; these read GIR and SR.

The protein belongs to the IPP isomerase type 2 family. As to quaternary structure, homooctamer. Dimer of tetramers. FMN is required as a cofactor. The cofactor is NADPH. Requires Mg(2+) as cofactor.

It localises to the cytoplasm. It catalyses the reaction isopentenyl diphosphate = dimethylallyl diphosphate. In terms of biological role, involved in the biosynthesis of isoprenoids. Catalyzes the 1,3-allylic rearrangement of the homoallylic substrate isopentenyl (IPP) to its allylic isomer, dimethylallyl diphosphate (DMAPP). This is Isopentenyl-diphosphate delta-isomerase from Streptococcus mutans serotype c (strain ATCC 700610 / UA159).